Consider the following 1260-residue polypeptide: uncharacterized protein (1260 aa).

The protein localises to the plastid. The protein resides in the chloroplast. This is an uncharacterized protein from Ostreococcus tauri.